Reading from the N-terminus, the 114-residue chain is PDZK1-interacting protein 1 (114 aa).

The Extracellular segment spans residues M1–Q28. The chain crosses the membrane as a helical span at residues P29–N51. Over H52–M114 the chain is Cytoplasmic. At S85 the chain carries Phosphoserine.

The protein belongs to the PDZK1-interacting protein 1/SMIM24 family. As to quaternary structure, forms a heterodimer (via N-terminal transmembrane helix) with SLC5A2/SGLT2 (via TM13); this interaction enhances SLC5A2 transporter activity. Interacts with PDZK1.

The protein localises to the apical cell membrane. Its function is as follows. Auxiliary protein of electrogenic Na(+)-coupled sugar symporter SLC5A2/SGLT2 and SLC5A1/SGLT1. Essential for the transporter activity of SLC5A2/SGLT2 but not SLC5A1/SGLT1. This is PDZK1-interacting protein 1 from Bos taurus (Bovine).